Consider the following 311-residue polypeptide: 4-hydroxy-tetrahydrodipicolinate synthase (311 aa).

Position 51 (Thr-51) interacts with pyruvate. Residue Tyr-140 is the Proton donor/acceptor of the active site. Residue Lys-168 is the Schiff-base intermediate with substrate of the active site. Position 209 (Ile-209) interacts with pyruvate.

This sequence belongs to the DapA family. Homotetramer; dimer of dimers.

It is found in the cytoplasm. The catalysed reaction is L-aspartate 4-semialdehyde + pyruvate = (2S,4S)-4-hydroxy-2,3,4,5-tetrahydrodipicolinate + H2O + H(+). It participates in amino-acid biosynthesis; L-lysine biosynthesis via DAP pathway; (S)-tetrahydrodipicolinate from L-aspartate: step 3/4. Its function is as follows. Catalyzes the condensation of (S)-aspartate-beta-semialdehyde [(S)-ASA] and pyruvate to 4-hydroxy-tetrahydrodipicolinate (HTPA). This chain is 4-hydroxy-tetrahydrodipicolinate synthase, found in Streptococcus gordonii (strain Challis / ATCC 35105 / BCRC 15272 / CH1 / DL1 / V288).